Consider the following 65-residue polypeptide: Large ribosomal subunit protein bL35 (65 aa).

The protein belongs to the bacterial ribosomal protein bL35 family.

The sequence is that of Large ribosomal subunit protein bL35 from Sodalis glossinidius (strain morsitans).